A 275-amino-acid chain; its full sequence is MANIKAKKYYSYAKINLFLHILNKRTDGYHNLQTWFTFLDLKDQLTFSFNNSREINISSNISIAAKQDNLVYKAIKKFQQSYRVQDIGVDIEIKKNIPMGAGLGGGSSNAATTLIALRDYYLPQLSNEEMIPLAVKLGADVPIFVYGKSAWAEGIGEILYHKDFSPQYALLIKPDIHISTKEFFTSEDLIKSSVLISKDLGFDKSIMHNDFENVFYAKYPEFSQYLKELDSDFRMTGTGSCFYLLSADKNKLEQLTRKINKPLDKWLVKTLNYVY.

Residue K14 is part of the active site. Residue 98–108 (PMGAGLGGGSS) participates in ATP binding. The active site involves D140.

Belongs to the GHMP kinase family. IspE subfamily.

It catalyses the reaction 4-CDP-2-C-methyl-D-erythritol + ATP = 4-CDP-2-C-methyl-D-erythritol 2-phosphate + ADP + H(+). It functions in the pathway isoprenoid biosynthesis; isopentenyl diphosphate biosynthesis via DXP pathway; isopentenyl diphosphate from 1-deoxy-D-xylulose 5-phosphate: step 3/6. Its function is as follows. Catalyzes the phosphorylation of the position 2 hydroxy group of 4-diphosphocytidyl-2C-methyl-D-erythritol. The sequence is that of 4-diphosphocytidyl-2-C-methyl-D-erythritol kinase from Francisella tularensis subsp. holarctica (strain FTNF002-00 / FTA).